We begin with the raw amino-acid sequence, 275 residues long: Probable ABC transporter permease protein PH1216 (275 aa).

6 consecutive transmembrane segments (helical) span residues 10–30 (LLYI…WSAI), 73–93 (IFTT…GFTI), 105–125 (LLAL…IPLV), 137–157 (ILGL…LLFT), 181–203 (IYTK…YQFT), and 241–261 (IQMA…IALG). The 193-residue stretch at 68–260 (ILNSLIFTTF…LPTLLIMIAL (193 aa)) folds into the ABC transmembrane type-1 domain.

It belongs to the binding-protein-dependent transport system permease family. MalFG subfamily.

The protein resides in the cell membrane. Functionally, probably part of a binding-protein-dependent transport system PH1214/15/16. Probably responsible for the translocation of the substrate across the membrane. This Pyrococcus horikoshii (strain ATCC 700860 / DSM 12428 / JCM 9974 / NBRC 100139 / OT-3) protein is Probable ABC transporter permease protein PH1216.